The sequence spans 197 residues: Guanylate kinase (197 aa).

Residues 1 to 30 form a disordered region; that stretch reads MAATPRGTSPVPPDARPRLTVLSGPSGVGK. The Guanylate kinase-like domain occupies 17-197; sequence PRLTVLSGPS…RELLALTNVV (181 aa). 24 to 31 provides a ligand contact to ATP; the sequence is GPSGVGKS.

This sequence belongs to the guanylate kinase family.

The protein localises to the cytoplasm. It catalyses the reaction GMP + ATP = GDP + ADP. In terms of biological role, essential for recycling GMP and indirectly, cGMP. The sequence is that of Guanylate kinase (gmk) from Streptomyces coelicolor (strain ATCC BAA-471 / A3(2) / M145).